Consider the following 582-residue polypeptide: Aspartate--tRNA ligase (582 aa).

E174 is a binding site for L-aspartate. The interval 198–201 is aspartate; sequence QITK. An L-aspartate-binding site is contributed by R220. Residues 220 to 222 and Q229 contribute to the ATP site; that span reads RDE. L-aspartate is bound at residue H443. An ATP-binding site is contributed by E477. R484 provides a ligand contact to L-aspartate. Residue 529 to 532 participates in ATP binding; the sequence is GLDR.

This sequence belongs to the class-II aminoacyl-tRNA synthetase family. Type 1 subfamily. In terms of assembly, homodimer.

The protein resides in the cytoplasm. The catalysed reaction is tRNA(Asp) + L-aspartate + ATP = L-aspartyl-tRNA(Asp) + AMP + diphosphate. Catalyzes the attachment of L-aspartate to tRNA(Asp) in a two-step reaction: L-aspartate is first activated by ATP to form Asp-AMP and then transferred to the acceptor end of tRNA(Asp). The protein is Aspartate--tRNA ligase of Streptococcus pyogenes serotype M6 (strain ATCC BAA-946 / MGAS10394).